The following is a 308-amino-acid chain: MSKKLTFQEIILTLQQYWNDQGCMLMQAYDNEKGAGTMSPYTFLRAIGPEPWNAAYVEPSRRPADGRYGENPNRLYQHHQFQVVMKPSPSNIQELYLASLEKLGINPLEHDIRFVEDNWENPSTGSAGLGWEVWLDGMEITQFTYFQQVGGLATSPVTAEVTYGLERLASYIQEVDSVYDIEWAPGVKYGEIFLQPEYEHSKYSFEISDQDMLLENFEKFEKEASRALEEGLVHPAYDYVLKCSHTFNLLDARGAVSVTERAGYIARIRNLARVVAKTFVAERKKLGFPLLDEATRAILLAEDANKSI.

It belongs to the class-II aminoacyl-tRNA synthetase family. In terms of assembly, tetramer of two alpha and two beta subunits.

The protein resides in the cytoplasm. It catalyses the reaction tRNA(Gly) + glycine + ATP = glycyl-tRNA(Gly) + AMP + diphosphate. This Streptococcus pyogenes serotype M3 (strain SSI-1) protein is Glycine--tRNA ligase alpha subunit.